A 307-amino-acid chain; its full sequence is UDP-3-O-acyl-N-acetylglucosamine deacetylase (307 aa).

Residues histidine 78, histidine 241, and aspartate 245 each contribute to the Zn(2+) site. Histidine 268 (proton donor) is an active-site residue.

Belongs to the LpxC family. Zn(2+) serves as cofactor.

The catalysed reaction is a UDP-3-O-[(3R)-3-hydroxyacyl]-N-acetyl-alpha-D-glucosamine + H2O = a UDP-3-O-[(3R)-3-hydroxyacyl]-alpha-D-glucosamine + acetate. It participates in glycolipid biosynthesis; lipid IV(A) biosynthesis; lipid IV(A) from (3R)-3-hydroxytetradecanoyl-[acyl-carrier-protein] and UDP-N-acetyl-alpha-D-glucosamine: step 2/6. Functionally, catalyzes the hydrolysis of UDP-3-O-myristoyl-N-acetylglucosamine to form UDP-3-O-myristoylglucosamine and acetate, the committed step in lipid A biosynthesis. The protein is UDP-3-O-acyl-N-acetylglucosamine deacetylase of Acidovorax sp. (strain JS42).